Reading from the N-terminus, the 313-residue chain is Tyrosine recombinase XerD (313 aa).

The 86-residue stretch at 17 to 102 (EDNDVIIEQF…TLRRFFQYLY (86 aa)) folds into the Core-binding (CB) domain. A Tyr recombinase domain is found at 123 to 307 (RLPKDLSEQQ…ATERLKVLHQ (185 aa)). Residues arginine 163, lysine 187, histidine 259, arginine 262, and histidine 285 contribute to the active site. Tyrosine 294 acts as the O-(3'-phospho-DNA)-tyrosine intermediate in catalysis.

It belongs to the 'phage' integrase family. XerD subfamily. In terms of assembly, forms a cyclic heterotetrameric complex composed of two molecules of XerC and two molecules of XerD, in which XerC interacts with XerD via its C-terminal region, XerD interacts with XerC via its C-terminal region and so on.

It localises to the cytoplasm. Its activity is regulated as follows. FtsK may regulate the catalytic switch between XerC and XerD in the heterotetrameric complex during the two steps of the recombination process. Its function is as follows. Site-specific tyrosine recombinase, which acts by catalyzing the cutting and rejoining of the recombining DNA molecules. Binds cooperatively to specific DNA consensus sequences that are separated from XerC binding sites by a short central region, forming the heterotetrameric XerC-XerD complex that recombines DNA substrates. The complex is essential to convert dimers of the bacterial chromosome into monomers to permit their segregation at cell division. It also contributes to the segregational stability of plasmids. In the complex XerD specifically exchanges the bottom DNA strands. The protein is Tyrosine recombinase XerD of Proteus mirabilis.